The chain runs to 465 residues: Poly(A) polymerase I (465 aa).

Catalysis depends on residues Asp80, Asp82, and Asp162. Positions 430–465 (APPEQKGMLNELDDDPAPRRRRSRPRKRAPRREGTV) are disordered. Over residues 448-459 (RRRRSRPRKRAP) the composition is skewed to basic residues.

This sequence belongs to the tRNA nucleotidyltransferase/poly(A) polymerase family.

It catalyses the reaction RNA(n) + ATP = RNA(n)-3'-adenine ribonucleotide + diphosphate. Functionally, adds poly(A) tail to the 3' end of many RNAs, which usually targets these RNAs for decay. Plays a significant role in the global control of gene expression, through influencing the rate of transcript degradation, and in the general RNA quality control. In Salmonella typhi, this protein is Poly(A) polymerase I.